The primary structure comprises 7705 residues: MNDYEIRDLTGSSQKSNNQKISNNSGESAHFNGTSENVKTESDDDSTCSSSLNKLSNRHSEPMNHLSVGGFVAKDLLSSLTIPLPQTVIRTCQSIDIDTPDRSRNDKTLTSFFYSSCKNLLLTTIIPDPLDLVAAAVGQSTAQALLVAQIGWMVCVCCRCCLCKCIANGRGVRGQKKQIQEPTIADDDGRDLPYEVPGSIHIPKPVYNKKLSKSRSSSVPHVSVPSLVSSSADYKRLSMWETSLNVESDVEPLHTPPLVVGRKLDYIDKEGNNPSCCRERGTRKPGFRPLRGSGSPPPPDPSTSTKVAVTSASEVKKIKDHKKQLKKEKEKKKKMDKKQSSSGGGFFTRWFGGSGSNNSQQNLAEDVIDARSERKTAKQREQELLQRSERRSGGRTHSHEEYRRHQQPSLMVNTNFDEDDYATIDRVRRSNNREMSMPASPRNVHFVDETSGPLSRTMNESAFGDRAHLQYRPRAQKGAAGPTTRGAPTSSVNQLDEATLDLLRLSTEPSPVPSRRALPKSASLSSVQQKQPIKTADGGQLKIGSVYTWDQNSVDTTTDDERAKDFLRGDRSSRLSPQSERKNERQIQIRQQSSGPTNRRETEIEYEEKRQGPPVVRTTVEGKLKMEKIVGADLITVDSCISSAWTVRDTVTNYKIKSTIGKKSLILEEIKDGQSKYKITLIENGETKMEREASLDVPDFVNKKDYLAEVSKKLLSDLREDSESVSALTHIEVEIVEDVTNILKTYVIGERADDVLAEEQLRLHYEQTADKTPSPIPLEKVEKIYVDELQKDKIELEDPEKADIHLIKDGRHFEGEGALKRIRRFETEESIEKPTVIRMEPRCAHAFADCDVAKKDDTSNYTVKIAVPLVHTITFLLKKSKMMRQQKAAGYEMEQEGQRFEDETTLRRIKRYETEEEEEKQHVAVIQHVEEVKVATMKTQREVEAEGGQYEMSQEGIHLRGETTFKKRGKHLDSESSEERFMEREAEGGQYAMQMEGERLLGEKKFRSKGRHYESESEESMASWNGGSPTLVDLVKKESSSIFEATFETANNHSPIVAEVRRPKLKKENTTIGCTISNQKATSANAELTTKHVNTEKGSGKFRELGEEQAMMLCGFENQKSSKEEVTGSRQQKNEIKVAFAAGSAETENTTISTTIFHDADSFAVEGSSKSANSTATYGRFKEMSEENASNMVYLQKSESSSSNLSGAETKMKHIQRQSSEARFSEFKQVAESCAVMIKNTGVERGSTSSTVAEAATDLRIRRKDAKGEIIVFVLFKRVFGNYVHASMRLASSGSGLLRENRSELREMRSEEKRSNSMHHEESHYAHSSYEHTSEHYSQSSFYHQESDEHGLEPDQQVSKQLSSIERQLLKLDEVVIGNECTDVVEVKVTIKKREQNANQLIVVLEELLETAICGGIREIKRSIVDTSLESRVRKLEQSSLYSIIKKSSSKESVVHCGKPPLERQASLEGRFRMEESWSAVECKRRSSSIDRASLKLRASQEEVCTGFWNTSKGESTRRTILQKTKSVESMCLKTKSASSTSIDMFSDCQRATVSQTISTEIASHRREIVAAAFGISTQSLERLLKFVEIIDWENITMNVSQKEQLSANLQALTSAPVNLDIPSDLGRIVAPAEQDAYSDLIMRERAESRVFAQLRASADEITIREVALGSMSQLEQAAFMSLLITSVSRCDLRTIAPSNIIANTEIFYDVAEEKMSVSGVMKRESRKEHSSKKFTSSREEIIQGFWKGERDEERVVKTLKDRMVSFKHSLSVEAASSTSENVSLGMRKADQKSEFTISQKLSPKEIVSEAYGVSESKLDQFFQVMEKMDWSNIELGEKEHTALSANIRTLAPEQKVCDGILGKLKAPKQQDESVGTQIQEIRRATAVMSVRASLLLTISSNSNFSKNISDSEKAVFSNLISVITSHNLSTIGTSSETTTASISYQDIPEMLAASKLWISRNSEKLKKEIREPVIQTVESFWNTTNDQEKVAVLLNEKIDSIYSSLNTLAASMENEIISQELVRHTENAGKVNIKPISPRELVSSSFKITSSDLQQFFNVLEKMDWSQISLPAQEHAIISKNVRSLAPSASELSNILGKLRAPEMQEETTDLKIRQAQQARVVLNVSESMSNTISSSETFSRIPENKKATLTNLVGIITTQDLSTLGASSENQTIEMDYTEAKEELEASKKLVDKNLSVLKTEIRESGDEVVQGFWNTASDKEKVGAIICEKLKSIHHTLHTHAIRTVTESLSTDIQKEQQKLSTHHFVKLSTRDVVQAAFRISSESVDHLLTLVEKMDWSKIDLVEPVYSNISSNVQALATSSSQSSGILGKLLPPAPEEETTSKEIREINTAKCILNVISSLNSTITSDASLDMISESEQAIFSNIIGVMASNNLTTSSQSTSSSFGFNNVFELSEARRVLQESNKQNLIQKVRESSEELIHGIWSTASETEKVAIVVKEKLETVHQAMKTLAIQMATQSVNSELIGSEGNLASIKSITLPTREVISAAFGISNEVIQKMLEVLTKGEWSTISLPQSEYESISQNVRALAEPSFNCDSILGKINAPGPQTETTSHELIEKNTAAAVANVKAAVESVISKESSLAKLPADEKAIITNLAGLVLSKDVSSLCTSSETFGFDQRIFRNQNANISLGAVRSETLLQRLREPIENQVQGFWSTASNQEKASFIAKQKLDTMYDTMKVIAIQMISQTIDGDFSSASISSETFKNIDKAAREVVAAEFGIANESVQKALEVLNKVEWSDISLPEKLHQNISSNVRVLADSSYNCDSIIGKLNAPEPQSAYVDQQISEHQTLEVIANIKSAVSSVISNDSVLSKRSEDEKAVISNIANLIISCDLASMSSTSNSFEFQRDILEPQNANVLLGTPASQVFTRNLQEPIQSEVQGFWSTNSSQEKASLVIRQKLNVKYDAMKMMATEIAYQSLNSNITSEETNLESQKSFDKSIRESIMASFGVSSEHVQKTLEILSKSELSTIVLPAVEYEATVQNIKALSEPNFNCESILGKLNAPDPQSAVMDIIMNEQRKLTVVSNIQSAIESVISNDSSLEKLTEVDKSVILKISEIIVSHDLTALSSSCSDFNLLQESNTQEKADIFLKTPNSQMLIERLREPIEKQVQGFWSTASNSEKQEMFLKEKVETIHAMLQTFSASLVSETVQRDFMATVQSLAALRSIQLTPREILCAAFGISNEQIEQTFRGLDEVDWSHIDIPCALRDNLLVNLRIVNADAPNVFGNLISRPDENQETSTVLEEKNRIQFLLNLQRSLDQTVQMTSSLTRSDERIEVKVSNIISLISSENLGDLISQAVQLAQPNMSDETEKSFEIPRNILLNRVVPETSEESIQSFWKTSQLAEEASSTISEKLSMLQSEFVVSAAKQVSTSLTLDYRRKIFNQNSEIIFGDLTRDVVKAAFSVSDETLNTLFSQLEQSDWSQIKLSSKQKSILSANIKSLATSNLDTLIGQLMPREADSEQSEASLSERSSVEMENTFKIQQIIFDTVVRKFGSDEERASIINLIGLLTSVNLKAAIQVASFERLPDSLDSTASITPVFKIQEHVRQPTEQVVQGFWSKERHPNETVEVVNRKIEVLKSILNCYAVAECHKSLERSLEKPSQQDETCATRGVTEVVQNAFAVTEQSYSKILKVLGSMQNFEIPEAVKETISKNLKILNLPPVDTLLVSKYKESHVSKTVEEQELVQFMFNFKSALNSEIEMSQNVSKCIEEETVVLPNLVAILASANLATIVPTESRQLSDSENILNFSIQHEESERSAATVRDEINILRHYLQTFAIQKASSEVSRVIEIIKTSQSFHLVHTTMLEEIKTIQLRMEVLKRVSMNQSTAEELLQEAFQNSEQQMETFQRIVQNVHWEETKLTEEIIRNLRINMTAIPRFESTVGSLKAPDDQHESADSYISSTRRAEAVINLMAAADNAISTSSTLSMMESDERLLHKTILKTMAVCNLTTPASRSETETMTQGFYQKVEQCQTEQELAERPKINCEMKVLEISDDEVHGIWSSRKEQESSQKILLASELEKATLQTLASGDETNSIYTELASFGTREEIEKLVSIELRDIVEKSFGVSEESLNKLLNLIPKMDWSSLTMPIVQKELVIKNLALLLPAEALIMESVGTIQAPPEEEAFAELDLKQAREAKVMMDIQECVFTTCTGYTEMNKPDDAEITTFSALLGTLSICDLVTMASSNIQVDSKYDYYRRPAPKNAETTFTESNADAFSLALQEAGEVTSSGIWSTVSNSDAAKTTVSDKLISISKTEMSMKAVSENAVNQDHSLKKDSIEAVEMNIPDSRKEILQKNYSIDRSNSTVEMQGAIASEDIAIQYSAPRVDNVSQTMRSQSQKDLLFGGSFGELEPPLPQEEDVETTARQSRVYRSSSQVRAPSEESIQKTEALRRSESLESNARKTFVDRRRENVSLSRKASVERETNMEARVAKADQSIPVETLQKSKKQESIFSSVVESKDLNVCGSWTTAKPPIGAKVSLQTKKVEKEVTSATMTVASASVECEVGLESKREQSRDATGSMVRAKSIEEVEREFGVEVTSTEKTLEKRDQIESWIKSIPQRLEVEESAEFGNDEVIIGGVMGSLEAPLEQEEETEKLLTMKRSASEARSLKAATKESIEEADEFSKIEADQEILTVQKELVKATGILNAAASREINASSKMEYSKVPSEDVIELSLTESRRQSNSGQFKETKEEEIVGLWNTGTKGENASKVLPHKPPIDTASMKAKAAKQNSIEMTGSLQKSPSAEAMGIVSQKVTEGANSKFGIAQGAVETTLTASAQSGVTCRDISVSNIGVASETVTQFSNKETGIGFGASNLIAPPPESAETEFTGKISNLSQTSLNKMAASDVGTTVESKIQAPGDNYGDVSLLQKVASSDAITKAMQASRDSAISVDFRQDRETVSAEKSDLNFKSTNSETQKLKLFESKEEESGIFIRSSHEYEETQKTLRHRSASRESASRTVTAPTNQEVQMNFDKKVEDSVAEGSLSIGIVRESSQSEVMQHAERTSELTKLSMNEEVAGVRAVSETTNETFRGYQQGDVEVQTGAAMGRIEAPRPQRGEAEITQKLRRTLSVERSAKASEMAESQTVTQIQKREDSLASEYSVRDTLLLKSSSVSHVATEQMSEHLVMRSKSEHHISEKLQERLIEKESFSSQEFISENQGVHTHWDVIDNNGDALICWKSSETEQKSLDAKQVTEELAGTTLDLSVRLLGGTDEEKIAEHVIVGASEVLNISETRADMEMSRQDAFSDDATYVASDILEERSLSTVHEFGESEASTTFGVGKLVTKKPEKEEVGRSFSETRKLSQFSDITAISETTTDMDSEILRLPECDQSVTLISHKNQQKDVKDLKATVENTADQVTLLEKREVREQSADVKKKKFEVEDIEEVLPMIRRWAEILSMKASTSVEIQAENKLSKPEAQAESQKYLKTANLEINKINVNATHEEVMSATTALECKTSGQDVASIRLRDKSRERVEKKYQENQWNLLSTNAEWETLLNDLEDSVTIAQSVQDSMAFSVKASATVNLNSDTSIKKAQPEIGIQKSISQSNVEKTVGQFSSATIGNELLVTRLGMDLEEIETLVDEINREQAVGGRIREFGKSETGGGIYLVRRALPKVKETSTHTVTVATSFRQIFSTMSAGDEISEANVELTIPSTSVGAEIKSTVARSDSMTFSTSHASEYTASTVADYARDIAVSASTAARKKAIPTERTSQKLKEVGADGIEILSLWEGIETDLDATTQLVDLLRVKSSLQTIESSEEVERINQYLEMPEEKGLVIHLINVQNKETCERNFAVSICSLDTVHSRKSEIPPTYSVSKVLTEKRVLRETWRVIESGDVRFNAVINLHRYSLSKPTLAQETVLREVVRIAAQPLFISAEPTYMRTKESSEDIVGVGIAYNVPEENLISAIKLDEKASGGCYELTTKAAGDEYKMISSILSKTQAVEKVKGKMIQKVVAKDEIRVLETTTESVNANFNYEIPEENFKIGIAKTCANNAAPFTMRLHECLDFYVKMFYNMNKKDDFESLIKTIIISNGIESKTLSCTAAEHIEATRNPEFNRPAEFSDIQKTVVDYNKIEGASLNTFEALNEKMALSTMLSRQDDYSRVEHIVKDKNRGANLKFRFIESSEEKQTTFSAFEIDTEKEEIERTIDLVRQGGQFKLSTDAAEENEITLHRDISKPIITHYDTLHLITLSNSAPHQILSTSGASNELHTISTQLSKPAEWLNTELLIVDKNVEQPVTWRVLECEECVENLHPIYRRPDDIFDLDEIWHIARNGGKFERRCKASGDEKEIFEQEIKSRGIKDDIIDKKFIVGNQGEPTSFTTIQTSSVSASVSQDMSRLGEKEAIKKVLQNSNKGINVEKKMIEATEYRETISEQFRKNDEFDKADLTVKDRRAGGSYELSTNASEQSSSSVSNELICPRPSQLSIEKTFITAQTIIPAILSCKASESIGHTISEQWNRPNDQFAISQIVKDCNKENEQFTFREAGEEYHTTNCFYTREQEEKVIAKTLHEARKGSGQTFETKHATDRSMDASQHLEKDRLAEATAEKLFVIGNTAGPVSYSSKSSSDIQHSQVVNLSRPSPYVQVEIIRKGANLGTPTYFHARETTSKTENVATQLSRKEEKMEVSTTHTTPLLAEPVTFDSNASKSHSTSLDKNLVASEDYELDAVVIIVDNNTEQPQFFRCSCTKEASTSAAAALSAGSKSESCKIVRLASNLGHPTSLVLCESSSVQETNNVHYQRDEHHEHISETKSYPRDGGKFTLDTKASTANEVRIDKDLEKKSDRELETEIKTIVRNEGEPVEIFVSATEESAAGVTTSLSRANPFESANILLTSPNKGEPAYSRVTESSELTETNNVQLRREEEHQETEKIIEIAANGGSSLLRAGFADEKFADIEAKLGKDAQFESAQTIRQIGNEDKTNLSIGASQETSVTFDETVQCNKSSCEETSITKVAKNIEPHVIFRSTEASDMAVGIHYTLRSSEKVEETEEIKNIARNGGSATFSCFASGDESPDSVSAFLTRQPQEETTEKLFPTPMFDFIKFNSTAAEEFAVWNTTIFRRKDNEGEVEKIFNTSEAGHNETFSANAAEDVSVTLDADLHFGVGYKEHRQITKDEANQGEGTGMHSGASEETIFNLGYDYCKQPTEFTTVCVTEDKLLIQGAYGFRAAKEESITLDADLHFGVNYRDLLAMGLHASNNEIEGTGMRSTASEETIFNLAYDYCKQPTEFRTVFVSEDHQFVHGAFGFRAVGEEHIETQVLELQARMVEVMVEGSVHNLARRHEDEPFVLYTEVIEETIIRVDEQLEKKTTVIETEQASEVKMREKGEERRKEEKRVSFAAEVQEKTMEAIDKSLGLDTSMEVEPAFQKPSIIKKPMKKERERRSRDLRQNAAPAFKPVRRNSLLQALAIGSPHNIPHFKTLDDIVKAIKHAGLEYSNLIFGIDYTKSNFYQGERTFDKRPLHTIDPAEMNPYQQVIQIVGKTLSSFDADGQIPAYGFGDEEFTDHGIFNIAERYDLEKDCNGFEEVLRVYNEVTPTIEMSGPTNFVPLIDRAIEICKEKHSYHILVIVADGQVTNEKINQKAIAAASHYPLSIIMVGVGDGPWNMMGRFDDNIPKRLFDNFHFVDFHKVMFNAPNADASFALNALMEIPDQYKAIKELGLLKHSRRG.

Disordered stretches follow at residues 1–61 (MNDY…RHSE), 269–360 (KEGN…NNSQ), 372–408 (SERK…HQQP), 464–492 (GDRA…TSSV), 506–538 (STEP…TADG), 560–614 (DERA…QGPP), 1301–1358 (NRSE…DQQV), 4381–4427 (ELEP…RSES), and 6779–6800 (RDEH…GKFT). Over residues 12–25 (SSQKSNNQKISNNS) the composition is skewed to low complexity. A compositionally biased stretch (basic and acidic residues) spans 269–282 (KEGNNPSCCRERGT). Low complexity predominate over residues 302-313 (STSTKVAVTSAS). Basic residues predominate over residues 318–336 (IKDHKKQLKKEKEKKKKMD). Residues 372–404 (SERKTAKQREQELLQRSERRSGGRTHSHEEYRR) are compositionally biased toward basic and acidic residues. The segment covering 522 to 532 (ASLSSVQQKQP) has biased composition (polar residues). Residues 560 to 587 (DERAKDFLRGDRSSRLSPQSERKNERQI) show a composition bias toward basic and acidic residues. Positions 588-597 (QIRQQSSGPT) are enriched in polar residues. Basic and acidic residues-rich tracts occupy residues 598–611 (NRRE…EKRQ) and 1301–1335 (NRSE…HTSE). Positions 4397–4409 (RQSRVYRSSSQVR) are enriched in low complexity. 2 stretches are compositionally biased toward basic and acidic residues: residues 4411-4427 (PSEE…RSES) and 6779-6797 (RDEH…RDGG). Positions 7475 to 7673 (NLIFGIDYTK…FHKVMFNAPN (199 aa)) constitute a VWFA domain.

This sequence belongs to the copine family. In terms of tissue distribution, expressed in body wall muscle.

The polypeptide is Copine family protein 2 (cpna-2) (Caenorhabditis elegans).